Consider the following 693-residue polypeptide: Golgin subfamily A member 6A (693 aa).

The stretch at 14 to 611 (LEESRQNKLA…KLLELQELVL (598 aa)) forms a coiled coil. 3 disordered regions span residues 20–69 (NKLA…PGDS), 497–547 (LPGE…GTEQ), and 661–693 (NVEP…MQDT). The segment covering 54–69 (SPETTTSGGCHSPGDS) has biased composition (polar residues). Residues 537-547 (LPKEKADGTEQ) are compositionally biased toward basic and acidic residues. Positions 676 to 693 (DNPTVQQIVQLSPVMQDT) are enriched in polar residues.

The protein belongs to the GOLGA6 family. In terms of tissue distribution, highly expressed in seminiferous tubes in testis. Highly expressed in spermatids, barely detectable in late pachytene spermatocytes, and not detectable in spermatogonia. Detected at intermediate levels in pancreas and lymph nodes, and at much lower levels in spleen, peripheral blood leukocytes, skeletal muscle, liver, lung, placenta, brain and heart.

The polypeptide is Golgin subfamily A member 6A (GOLGA6A) (Homo sapiens (Human)).